Here is a 239-residue protein sequence, read N- to C-terminus: Probable transcriptional regulatory protein ABO_1803 (239 aa).

It belongs to the TACO1 family.

It is found in the cytoplasm. In Alcanivorax borkumensis (strain ATCC 700651 / DSM 11573 / NCIMB 13689 / SK2), this protein is Probable transcriptional regulatory protein ABO_1803.